The chain runs to 443 residues: Glucose-6-phosphate isomerase (443 aa).

The Proton donor role is filled by Glu-285. Active-site residues include His-306 and Lys-420.

The protein belongs to the GPI family.

The protein localises to the cytoplasm. It carries out the reaction alpha-D-glucose 6-phosphate = beta-D-fructose 6-phosphate. It functions in the pathway carbohydrate biosynthesis; gluconeogenesis. The protein operates within carbohydrate degradation; glycolysis; D-glyceraldehyde 3-phosphate and glycerone phosphate from D-glucose: step 2/4. Its function is as follows. Catalyzes the reversible isomerization of glucose-6-phosphate to fructose-6-phosphate. In Staphylococcus haemolyticus (strain JCSC1435), this protein is Glucose-6-phosphate isomerase.